A 581-amino-acid chain; its full sequence is Arginine--tRNA ligase (581 aa).

Positions 122–132 match the 'HIGH' region motif; sequence PNVAKPMHVGH.

Belongs to the class-I aminoacyl-tRNA synthetase family. As to quaternary structure, monomer.

The protein resides in the cytoplasm. It catalyses the reaction tRNA(Arg) + L-arginine + ATP = L-arginyl-tRNA(Arg) + AMP + diphosphate. The polypeptide is Arginine--tRNA ligase (Francisella tularensis subsp. holarctica (strain FTNF002-00 / FTA)).